The following is a 93-amino-acid chain: uncharacterized protein (93 aa).

The disordered stretch occupies residues 73–93 (KWTVSGPVKQDTGKTDPAEKN). Positions 83 to 93 (DTGKTDPAEKN) are enriched in basic and acidic residues.

This is an uncharacterized protein from Rhodobacter capsulatus (Rhodopseudomonas capsulata).